A 148-amino-acid chain; its full sequence is 3-hydroxyacyl-[acyl-carrier-protein] dehydratase FabZ (148 aa).

Residue His55 is part of the active site.

This sequence belongs to the thioester dehydratase family. FabZ subfamily.

It is found in the cytoplasm. It catalyses the reaction a (3R)-hydroxyacyl-[ACP] = a (2E)-enoyl-[ACP] + H2O. Functionally, involved in unsaturated fatty acids biosynthesis. Catalyzes the dehydration of short chain beta-hydroxyacyl-ACPs and long chain saturated and unsaturated beta-hydroxyacyl-ACPs. The chain is 3-hydroxyacyl-[acyl-carrier-protein] dehydratase FabZ from Haemophilus influenzae (strain ATCC 51907 / DSM 11121 / KW20 / Rd).